We begin with the raw amino-acid sequence, 72 residues long: Protein kish-A (72 aa).

The signal sequence occupies residues 1–26 (MSAIFNFQSLLTVILLLICTCAYIRS). Residues 27–53 (LAPSLLDKNKTGLLGIFWKCARIGERK) lie on the Extracellular side of the membrane. A glycan (N-linked (GlcNAc...) asparagine) is linked at Asn35. Residues 54-71 (SPYVAVCCVVMAFSILFV) form a helical membrane-spanning segment. A topological domain (cytoplasmic) is located at residue Gln72.

It belongs to the KISH family.

The protein localises to the golgi apparatus membrane. Functionally, involved in the early part of the secretory pathway. This chain is Protein kish-A (TMEM167A), found in Gallus gallus (Chicken).